A 140-amino-acid polypeptide reads, in one-letter code: IQNPDPAVYQLRDSKSSDKSVCLFTDFDSQTNVSQSKDSDVYITDKTVLDMRSMDFKSNSAVAWSNKSDFACANAFNNSIIPEDTFFPSPESSCDVKLVEKSFETDTNLNFQNLSVIGFRILLLKVAGFNLLMTLRLWSS.

Residues 19-107 (KSVCLFTDFD…LVEKSFETDT (89 aa)) enclose the Ig-like C1-type domain. A disulfide bridge connects residues cysteine 22 and cysteine 72. N-linked (GlcNAc...) asparagine glycosylation is found at asparagine 32, asparagine 66, asparagine 77, and asparagine 113. Positions 94-115 (CDVKLVEKSFETDTNLNFQNLS) are connecting peptide. The chain crosses the membrane as a helical span at residues 116–138 (VIGFRILLLKVAGFNLLMTLRLW). The Cytoplasmic segment spans residues 139 to 140 (SS).

In terms of assembly, alpha-beta TR is a heterodimer composed of an alpha and beta chain; disulfide-linked. The alpha-beta TR is associated with the transmembrane signaling CD3 coreceptor proteins to form the TR-CD3 (TcR or TCR). The assembly of alpha-beta TR heterodimers with CD3 occurs in the endoplasmic reticulum where a single alpha-beta TR heterodimer associates with one CD3D-CD3E heterodimer, one CD3G-CD3E heterodimer and one CD247 homodimer forming a stable octameric structure. CD3D-CD3E and CD3G-CD3E heterodimers preferentially associate with TR alpha and TR beta chains, respectively. The association of the CD247 homodimer is the last step of TcR assembly in the endoplasmic reticulum and is required for transport to the cell surface.

Its subcellular location is the cell membrane. Its function is as follows. Constant region of T cell receptor (TR) alpha chain. Alpha-beta T cell receptors are antigen specific receptors which are essential to the immune response and are present on the cell surface of T lymphocytes. Recognize peptide-major histocompatibility (MH) (pMH) complexes that are displayed by antigen presenting cells (APC), a prerequisite for efficient T cell adaptive immunity against pathogens. Binding of alpha-beta TR to pMH complex initiates TR-CD3 clustering on the cell surface and intracellular activation of LCK that phosphorylates the ITAM motifs of CD3G, CD3D, CD3E and CD247 enabling the recruitment of ZAP70. In turn, ZAP70 phosphorylates LAT, which recruits numerous signaling molecules to form the LAT signalosome. The LAT signalosome propagates signal branching to three major signaling pathways, the calcium, the mitogen-activated protein kinase (MAPK) kinase and the nuclear factor NF-kappa-B (NF-kB) pathways, leading to the mobilization of transcription factors that are critical for gene expression and essential for T cell growth and differentiation. The T cell repertoire is generated in the thymus, by V-(D)-J rearrangement. This repertoire is then shaped by intrathymic selection events to generate a peripheral T cell pool of self-MH restricted, non-autoaggressive T cells. Post-thymic interaction of alpha-beta TR with the pMH complexes shapes TR structural and functional avidity. The sequence is that of T cell receptor alpha chain constant from Homo sapiens (Human).